The following is a 225-amino-acid chain: Elongation factor 1-beta (225 aa).

In terms of domain architecture, GST C-terminal spans 2-84 (GFGDLKSPAG…ALGTYGPADV (83 aa)). Lys7 carries the N6-acetyllysine modification. Phosphoserine occurs at positions 8 and 42. Residues 80–114 (GPADVEDTTGSGATDSKDDDDIDLFGSDDEEESEE) form a disordered region. Residues Thr88 and Thr93 each carry the phosphothreonine modification. Ser95 bears the Phosphoserine mark. The span at 96 to 113 (KDDDDIDLFGSDDEEESE) shows a compositional bias: acidic residues. Phosphoserine; by CK2 is present on Ser106. Residue Lys147 forms a Glycyl lysine isopeptide (Lys-Gly) (interchain with G-Cter in SUMO2) linkage. Phosphoserine is present on Ser174.

The protein belongs to the EF-1-beta/EF-1-delta family. In terms of assembly, EF-1 is composed of 4 subunits: alpha, beta (alpha subunit of the eEF1B subcomplex), delta (beta subunit of the eEF1B subcomplex), and gamma (gamma subunit of the eEF1B subcomplex). Interacts with elongation factor EEF1A1. In terms of processing, phosphorylation affects the GDP/GTP exchange rate.

Catalytic subunit of the guanine nucleotide exchange factor (GEF) (eEF1B subcomplex) of the eukaryotic elongation factor 1 complex (eEF1). Stimulates the exchange of GDP for GTP on elongation factor 1A (eEF1A), probably by displacing GDP from the nucleotide binding pocket in eEF1A. The sequence is that of Elongation factor 1-beta (EEF1B) from Oryctolagus cuniculus (Rabbit).